The primary structure comprises 646 residues: Phosphomethylpyrimidine synthase (646 aa).

Residues 1-13 (MNIRSNPDTTRPA) show a composition bias toward polar residues. The tract at residues 1–30 (MNIRSNPDTTRPAVTTGALPSSRKMFSAPD) is disordered. Substrate contacts are provided by residues asparagine 221, methionine 250, tyrosine 279, histidine 315, 335 to 337 (SRG), 376 to 379 (DGLR), and glutamate 415. Histidine 419 lines the Zn(2+) pocket. Residue tyrosine 442 coordinates substrate. Histidine 483 contributes to the Zn(2+) binding site. The [4Fe-4S] cluster site is built by cysteine 563, cysteine 566, and cysteine 571.

Belongs to the ThiC family. Homodimer. [4Fe-4S] cluster is required as a cofactor.

The catalysed reaction is 5-amino-1-(5-phospho-beta-D-ribosyl)imidazole + S-adenosyl-L-methionine = 4-amino-2-methyl-5-(phosphooxymethyl)pyrimidine + CO + 5'-deoxyadenosine + formate + L-methionine + 3 H(+). It participates in cofactor biosynthesis; thiamine diphosphate biosynthesis. Catalyzes the synthesis of the hydroxymethylpyrimidine phosphate (HMP-P) moiety of thiamine from aminoimidazole ribotide (AIR) in a radical S-adenosyl-L-methionine (SAM)-dependent reaction. This is Phosphomethylpyrimidine synthase from Nitrobacter winogradskyi (strain ATCC 25391 / DSM 10237 / CIP 104748 / NCIMB 11846 / Nb-255).